A 356-amino-acid polypeptide reads, in one-letter code: Protein RecA (356 aa).

Position 69-76 (69-76 (GPESSGKT)) interacts with ATP.

This sequence belongs to the RecA family.

It localises to the cytoplasm. Functionally, can catalyze the hydrolysis of ATP in the presence of single-stranded DNA, the ATP-dependent uptake of single-stranded DNA by duplex DNA, and the ATP-dependent hybridization of homologous single-stranded DNAs. It interacts with LexA causing its activation and leading to its autocatalytic cleavage. The protein is Protein RecA of Gloeothece citriformis (strain PCC 7424) (Cyanothece sp. (strain PCC 7424)).